Consider the following 253-residue polypeptide: CD151 antigen (253 aa).

Topologically, residues 1–18 (MGEFNEKKTTCGTVCLKY) are cytoplasmic. 2 S-palmitoyl cysteine lipidation sites follow: C11 and C15. A helical membrane pass occupies residues 19–39 (LLFTYNCCFWLAGLAVMAVGI). Over 40-57 (WTLALKSDYISLLASGTY) the chain is Extracellular. The helical transmembrane segment at 58–78 (LATAYILVVAGTVVMVTGVLG) threads the bilayer. Residues 79–91 (CCATFKERRNLLR) lie on the Cytoplasmic side of the membrane. A helical membrane pass occupies residues 92-112 (LYFILLLIIFLLEIIAGILAY). The Extracellular portion of the chain corresponds to 113–221 (AYYQQLNTEL…LETFIQEHLR (109 aa)). N-linked (GlcNAc...) asparagine glycosylation is present at N159. The chain crosses the membrane as a helical span at residues 222–242 (VIGAVGIGIACVQVFGMIFTC). S-palmitoyl cysteine attachment occurs at residues C242 and C243. Over 243–253 (CLYRSLKLEHY) the chain is Cytoplasmic.

The protein belongs to the tetraspanin (TM4SF) family. As to quaternary structure, interacts with integrins ITGA3:ITGB1, ITGA5:ITGB1, ITGA3:ITGB1 and ITGA6:ITGB4 and with CD9 and CD181. Interacts (via the second extracellular domain) with integrin ITGAV:ITGB3. Interacts with ITGA3; this interaction modulates ITGA3 glycosylation pattern. Interacts with F11R. Interacts with RAC1 and CDC42; these interactions mediate physical association of RAC1 and CDC42 with integrin adhesion receptor complexes. Post-translationally, palmitoylated. Palmitoylation by ZDHHC2 regulates CD151 expression, association with other tetraspanin family proteins and function in cell adhesion. In terms of processing, ubiquitinated by RNF128 on lysine residues present in the tetraspanin amino terminus via 'Lys-48'-linked ubiquitin leading to proteasomal degradation. As to expression, expressed in a variety of tissues including vascular endothelium and epidermis. Expressed on erythroid cells, with a higher level of expression in erythroid precursors than on mature erythrocytes. Acts as a sensitive T-cell activation marker.

It localises to the cell membrane. In terms of biological role, structural component of specialized membrane microdomains known as tetraspanin-enriched microdomains (TERMs), which act as platforms for receptor clustering and signaling. Plays a role in various cellular and molecular mechanism through its association with both integrin and non-integrin proteins. These interactions facilitate critical cellular functions, including cell-to-cell communication, wound healing, platelet aggregation, trafficking, cell motility, and angiogenesis. Via interaction with JAM-A/F11R and integrin ITGA3:ITGB1, promotes the recruitment of signaling molecules such as RAC1, CDC42 and RhoGTPases to facilitate the polarization of epithelial cells and the reorganization of the actin cytoskeleton, which are critical steps in cell migration process. Regulates the glycosylation pattern of ITGA3:ITGB1 thereby modulating its activity. Plays an essential role in the maintenance of central laminin-binding integrin ITGA6:ITGB4-containing adhesion complexes. Essential for the proper assembly of the glomerular and tubular basement membranes in kidney. Contributes to T-cell activation by modulating integrin signaling leading to activation of downstream targets PTK2 and MAPK1/MAPK3. Functionally, (Microbial infection) Plays a role in human papillomavirus 16/HPV-16 endocytosis upon binding to cell surface receptor. (Microbial infection) Plays a role in human cytomegalovirus entry into host cell by contributing to entry receptor binding, membrane fusion, or release of the capsid. The polypeptide is CD151 antigen (CD151) (Homo sapiens (Human)).